The chain runs to 551 residues: Solute carrier family 22 member 27 (551 aa).

Residues 1-15 are Cytoplasmic-facing; sequence MSFQELLNQVGSLGR. The chain crosses the membrane as a helical span at residues 16–36; sequence FQILQIVFLLLLNAIVVPHIA. The Extracellular portion of the chain corresponds to 37 to 145; the sequence is MENFTAAIPN…DLVCESQALN (109 aa). 5 N-linked (GlcNAc...) asparagine glycosylation sites follow: Asn39, Asn56, Asn62, Asn102, and Asn107. The helical transmembrane segment at 146 to 166 threads the bilayer; that stretch reads SVTKFSFMIGLFIGGIICGHL. Residues 167 to 173 are Cytoplasmic-facing; sequence SDRLGRK. The chain crosses the membrane as a helical span at residues 174–194; sequence FILTCALLQFAITETCVAFAP. Residues 195 to 203 are Extracellular-facing; it reads SFFIYCSLR. The helical transmembrane segment at 204–224 threads the bilayer; the sequence is FLAGLSVEPILVNSHLLMLEW. Over 225 to 234 the chain is Cytoplasmic; it reads TSPKFLTMMA. A helical membrane pass occupies residues 235–255; sequence ALLSCAPNIGYMISAGLAFLF. Topologically, residues 256–258 are extracellular; the sequence is RIW. A helical membrane pass occupies residues 259–279; sequence HHLQLTMSVPIFFFLILTRWL. The Cytoplasmic segment spans residues 280–348; that stretch reads SESARWLIVT…LFHTSILRKR (69 aa). A helical transmembrane segment spans residues 349 to 369; it reads ICVLSFMRLFFTVSIFGLAVH. Residues 370-376 lie on the Extracellular side of the membrane; it reads LQHLSSN. A helical transmembrane segment spans residues 377-397; it reads IILLQFLISALAILVSVIGPF. Residues 398–405 lie on the Cytoplasmic side of the membrane; that stretch reads VLNHIGRR. The chain crosses the membrane as a helical span at residues 406–426; the sequence is ITYLVLMSLRGIFILIAVFVP. The Extracellular segment spans residues 427–432; that stretch reads QEMQTL. Residues 433–453 traverse the membrane as a helical segment; the sequence is RIIMATLAEGISSLCVGVSRL. At 454 to 467 the chain is on the cytoplasmic side; sequence HTNELLPTTLRATA. A helical membrane pass occupies residues 468-488; that stretch reads VGVIGFFGNSGSFLSPLFMLL. At 489–494 the chain is on the extracellular side; that stretch reads ATYYAN. Residues 495–515 form a helical membrane-spanning segment; sequence MPWIFYGGFSIFNAFTVFLLP. Residues 516 to 551 are Cytoplasmic-facing; sequence ETKNQPLPDSTHDVGNDWKESRKGKKEDPIIKVTRF. The tract at residues 523 to 551 is disordered; sequence PDSTHDVGNDWKESRKGKKEDPIIKVTRF. A compositionally biased stretch (basic and acidic residues) spans 525–545; that stretch reads STHDVGNDWKESRKGKKEDPI.

This sequence belongs to the major facilitator (TC 2.A.1) superfamily. Organic cation transporter (TC 2.A.1.19) family. As to expression, expressed in proximal kidney tubules, and in liver hepatocytes (at protein level).

It localises to the cell membrane. Its function is as follows. Does not appear to have transporter activity. Sodium-independent organic anion transporter which exhibits high specificity for L-carnitine. Can also transport salicylic acid and the drug cimetidine. The chain is Solute carrier family 22 member 27 from Mus musculus (Mouse).